The sequence spans 442 residues: UBX domain-containing protein 6 (442 aa).

The interval 1–10 (MKKFFQEIKA) is mediates interaction with LMAN1. Residues 13–111 (KFKSAGPGQK…TNSVPEPKEE (99 aa)) are disordered. A Phosphoserine modification is found at serine 36. The VCP/p97-interacting motif (VIM) stretch occupies residues 51–63 (EAQMAAAAALARL). A compositionally biased stretch (low complexity) spans 52–61 (AQMAAAAALA). Over residues 90-105 (EATSSNNPGAPGTNSV) the composition is skewed to polar residues. The 70-residue stretch at 175–244 (VDTIAKYLDN…GQEEFYVLGE (70 aa)) folds into the PUB domain. A UBX domain is found at 332–408 (RKYTYALVRV…GLVPSALLTF (77 aa)).

As to quaternary structure, interacts with VCP through the PUB domain (via C-terminus) and VIM motif (via N-terminus); the interaction is direct. Forms a ternary complex with CAV1 and VCP. Interacts with SYVN1. Interacts with HERPUD1. Interacts with VCPKMT. May interact with DERL1. Interacts with PLAA, VCP and YOD1; may form a complex involved in macroautophagy. Interacts with LMAN1. As to expression, widely expressed (at protein level). Highest expression in brain (at protein level).

Its subcellular location is the cytoplasm. It localises to the cytosol. The protein localises to the membrane. The protein resides in the nucleus. It is found in the cytoskeleton. Its subcellular location is the microtubule organizing center. It localises to the centrosome. The protein localises to the early endosome membrane. The protein resides in the late endosome membrane. It is found in the lysosome membrane. In terms of biological role, may negatively regulate the ATPase activity of VCP, an ATP-driven segregase that associates with different cofactors to control a wide variety of cellular processes. As a cofactor of VCP, it may play a role in the transport of CAV1 to lysosomes for degradation. It may also play a role in endoplasmic reticulum-associated degradation (ERAD) of misfolded proteins. Together with VCP and other cofactors, it may play a role in macroautophagy, regulating for instance the clearance of damaged lysosomes. This Mus musculus (Mouse) protein is UBX domain-containing protein 6.